The following is a 523-amino-acid chain: MAAVAVAVREDSGSGMKAELSARPGAGGKEMTQEEKLQLRKEKKQQKKKRKEEKGTDVDTASAVSAAQCPGPAREAPGPGSQSSTPGEKVPAGRTKAELRAERRAKQEAERALKQARKGEQGGPPPQASPSTAGEAPAGGKRLTEHTQADDPTLLRRLVRKSERQQVPTRKDYGSKVSLFSHLPQYSRQNSLTQYMSIPSSVIHPAMVRLGLQYSQGLISGSNARCIALLRALQQVIQDYTTPPNEELSRDLVNKLKPYICFLTQCRPLSASMYNAIKFLNKEITGVSSTKREEEAKAELQAAADRYVQEKIVLAAQAILRFASKKISNGDVILVYGCSSLVSRILQEAWSEGRKFRVVVVDSRPRLEGRHMLRFLVRAGVPASYLLIPAASYVLPEVSKVLLGAHALLANGSVMSRVGTAQLALVARAHNVPVLVCCETYKFCERVQTDAFVSNELDDPDDLQCERGDHVALANWQSHPSLRLLNLVYDVTPPELVDLVITELGMIPCSSVPVVLRVKSSDQ.

Residues 1–154 form a disordered region; the sequence is MAAVAVAVRE…EHTQADDPTL (154 aa). N-acetylalanine is present on A2. S12 carries the phosphoserine modification. Residues 31-40 show a composition bias toward basic and acidic residues; it reads MTQEEKLQLR. Residues 41 to 51 show a composition bias toward basic residues; sequence KEKKQQKKKRK. The residue at position 85 (T85) is a Phosphothreonine. Positions 95–120 are enriched in basic and acidic residues; it reads TKAELRAERRAKQEAERALKQARKGE. S129 is subject to Phosphoserine. The tract at residues 170-179 is may bind the chemical integrated stress response (ISR) inhibitor ISRIB; that stretch reads RKDYGSKVSL.

This sequence belongs to the eIF-2B alpha/beta/delta subunits family. In terms of assembly, component of the translation initiation factor 2B (eIF2B) complex which is a heterodecamer of two sets of five different subunits: alpha, beta, gamma, delta and epsilon. Subunits alpha, beta and delta comprise a regulatory subcomplex and subunits epsilon and gamma comprise a catalytic subcomplex. Within the complex, the hexameric regulatory complex resides at the center, with the two heterodimeric catalytic subcomplexes bound on opposite sides.

Its subcellular location is the cytoplasm. It is found in the cytosol. Its activity is regulated as follows. Activated by the chemical integrated stress response (ISR) inhibitor ISRIB which stimulates guanine nucleotide exchange factor activity for both phosphorylated and unphosphorylated eIF2. Functionally, acts as a component of the translation initiation factor 2B (eIF2B) complex, which catalyzes the exchange of GDP for GTP on eukaryotic initiation factor 2 (eIF2) gamma subunit. Its guanine nucleotide exchange factor activity is repressed when bound to eIF2 complex phosphorylated on the alpha subunit, thereby limiting the amount of methionyl-initiator methionine tRNA available to the ribosome and consequently global translation is repressed. This Oryctolagus cuniculus (Rabbit) protein is Translation initiation factor eIF2B subunit delta (EIF2B4).